The primary structure comprises 429 residues: UPF0053 protein YugS (429 aa).

4 helical membrane passes run Met-1–Ala-21, Ala-61–Phe-81, Ile-101–Leu-121, and Ala-133–Ile-153. One can recognise a CNNM transmembrane domain in the interval Met-1–Glu-201. CBS domains are found at residues Met-220 to Leu-281 and Ile-284 to Glu-341.

It belongs to the UPF0053 family.

The protein localises to the cell membrane. This Bacillus subtilis (strain 168) protein is UPF0053 protein YugS (yugS).